Consider the following 45-residue polypeptide: Cytochrome c6 (45 aa).

Positions 12, 15, and 16 each coordinate heme c.

It belongs to the cytochrome c family. PetJ subfamily. Monomer. Post-translationally, binds 1 heme c group covalently per subunit.

The protein resides in the cellular thylakoid lumen. In terms of biological role, functions as an electron carrier between membrane-bound cytochrome b6-f and photosystem I in oxygenic photosynthesis. This chain is Cytochrome c6 (petJ), found in Prochlorothrix hollandica.